Reading from the N-terminus, the 192-residue chain is Potassium-transporting ATPase KdpC subunit (192 aa).

A helical membrane pass occupies residues 7–27 (PLIVLFVVLAALTGLAYPAVM).

This sequence belongs to the KdpC family. As to quaternary structure, the system is composed of three essential subunits: KdpA, KdpB and KdpC.

It localises to the cell inner membrane. Functionally, part of the high-affinity ATP-driven potassium transport (or Kdp) system, which catalyzes the hydrolysis of ATP coupled with the electrogenic transport of potassium into the cytoplasm. This subunit acts as a catalytic chaperone that increases the ATP-binding affinity of the ATP-hydrolyzing subunit KdpB by the formation of a transient KdpB/KdpC/ATP ternary complex. The protein is Potassium-transporting ATPase KdpC subunit of Paraburkholderia xenovorans (strain LB400).